Consider the following 207-residue polypeptide: 5-nitrosalicylic acid 1,2-dioxygenase (207 aa).

A Cupin type-2 domain is found at 85–151; the sequence is QLIHPGEEVT…GDKDTLMYVI (67 aa).

It catalyses the reaction 5-nitrosalicylate + O2 = 2-oxo-3-(5-oxofuran-2-ylidene)propanoate + nitrite + H(+). Dioxygenase that catalyzes the cleavage of the aromatic ring of 5-nitrosalicylate (5NSA) without prior removal of the nitro group in biodegradation of 5-nitroanthranilate. The polypeptide is 5-nitrosalicylic acid 1,2-dioxygenase (naaB) (Bradyrhizobium sp).